The chain runs to 853 residues: Probable inorganic carbon transporter subunit DabA (853 aa).

The disordered stretch occupies residues 1–21 (MSHANSEETMMNTAVAHPSTS). Residues 7 to 21 (EETMMNTAVAHPSTS) show a composition bias toward polar residues. Positions 364, 366, 546, and 561 each coordinate Zn(2+).

It belongs to the inorganic carbon transporter (TC 9.A.2) DabA family. As to quaternary structure, forms a complex with DabB. It depends on Zn(2+) as a cofactor.

It is found in the cell inner membrane. Its function is as follows. Part of an energy-coupled inorganic carbon pump. This chain is Probable inorganic carbon transporter subunit DabA, found in Methylovorus glucosotrophus (strain SIP3-4).